The primary structure comprises 137 residues: Large ribosomal subunit protein uL16 (137 aa).

Belongs to the universal ribosomal protein uL16 family. As to quaternary structure, part of the 50S ribosomal subunit.

Binds 23S rRNA and is also seen to make contacts with the A and possibly P site tRNAs. The polypeptide is Large ribosomal subunit protein uL16 (Xanthobacter autotrophicus (strain ATCC BAA-1158 / Py2)).